A 403-amino-acid polypeptide reads, in one-letter code: Phosphoglycerate kinase (403 aa).

Residues 21–23 (DFN), Arg-36, 59–62 (HLGR), Arg-119, and Arg-159 each bind substrate. ATP-binding positions include Lys-214, Gly-301, Glu-332, and 359–362 (GGDS).

This sequence belongs to the phosphoglycerate kinase family. In terms of assembly, monomer.

The protein localises to the cytoplasm. It carries out the reaction (2R)-3-phosphoglycerate + ATP = (2R)-3-phospho-glyceroyl phosphate + ADP. Its pathway is carbohydrate degradation; glycolysis; pyruvate from D-glyceraldehyde 3-phosphate: step 2/5. The sequence is that of Phosphoglycerate kinase from Lactobacillus delbrueckii subsp. lactis.